An 878-amino-acid polypeptide reads, in one-letter code: Probable LRR receptor-like serine/threonine-protein kinase MEE39 (878 aa).

An N-terminal signal peptide occupies residues 1-25 (MKNLCWVFLSLFWFGVFLIIRFAEG). At 26-514 (QNQEGFISLD…IDKPKKKVAV (489 aa)) the chain is on the extracellular side. Residues Asn183, Asn203, Asn235, Asn290, Asn404, Asn418, Asn445, and Asn466 are each glycosylated (N-linked (GlcNAc...) asparagine). LRR repeat units follow at residues 413–436 (RIIS…QNLA), 437–458 (HLES…FLAT), and 461–483 (SLLV…LRDR). Residues 515–535 (KVVAPVASIAAIVVVILLFVF) form a helical membrane-spanning segment. At 536–878 (KKKMSSRNKP…FDTDVKPKAR (343 aa)) the chain is on the cytoplasmic side. At Thr557 the chain carries Phosphothreonine. Residues 566–840 (KNLQRPLGEG…QVIINLKECL (275 aa)) form the Protein kinase domain. ATP is bound by residues 572–580 (LGEGGFGVV) and Lys594. Tyr639 carries the post-translational modification Phosphotyrosine. The active-site Proton acceptor is Asp691. At Ser726 the chain carries Phosphoserine. Thr727 and Thr732 each carry phosphothreonine. Position 740 is a phosphotyrosine (Tyr740). Over residues 849 to 869 (RNNQNMDSGHSSDQLNVTVTF) the composition is skewed to polar residues. Residues 849–878 (RNNQNMDSGHSSDQLNVTVTFDTDVKPKAR) are disordered.

The protein belongs to the protein kinase superfamily. Ser/Thr protein kinase family.

It is found in the membrane. It catalyses the reaction L-seryl-[protein] + ATP = O-phospho-L-seryl-[protein] + ADP + H(+). It carries out the reaction L-threonyl-[protein] + ATP = O-phospho-L-threonyl-[protein] + ADP + H(+). In terms of biological role, receptor-like serine/threonine-kinase required during the endosperm development in seeds. This chain is Probable LRR receptor-like serine/threonine-protein kinase MEE39 (MEE39), found in Arabidopsis thaliana (Mouse-ear cress).